Here is a 149-residue protein sequence, read N- to C-terminus: SsrA-binding protein (149 aa).

Residues 121–149 (GKKQHDKRADELDKDSKREAQRAMKERQR) are disordered. The segment covering 127–149 (KRADELDKDSKREAQRAMKERQR) has biased composition (basic and acidic residues).

It belongs to the SmpB family.

It is found in the cytoplasm. Functionally, required for rescue of stalled ribosomes mediated by trans-translation. Binds to transfer-messenger RNA (tmRNA), required for stable association of tmRNA with ribosomes. tmRNA and SmpB together mimic tRNA shape, replacing the anticodon stem-loop with SmpB. tmRNA is encoded by the ssrA gene; the 2 termini fold to resemble tRNA(Ala) and it encodes a 'tag peptide', a short internal open reading frame. During trans-translation Ala-aminoacylated tmRNA acts like a tRNA, entering the A-site of stalled ribosomes, displacing the stalled mRNA. The ribosome then switches to translate the ORF on the tmRNA; the nascent peptide is terminated with the 'tag peptide' encoded by the tmRNA and targeted for degradation. The ribosome is freed to recommence translation, which seems to be the essential function of trans-translation. The protein is SsrA-binding protein of Dechloromonas aromatica (strain RCB).